Reading from the N-terminus, the 527-residue chain is 4-alpha-glucanotransferase (527 aa).

Belongs to the disproportionating enzyme family.

It is found in the cytoplasm. It catalyses the reaction Transfers a segment of a (1-&gt;4)-alpha-D-glucan to a new position in an acceptor, which may be glucose or a (1-&gt;4)-alpha-D-glucan.. The chain is 4-alpha-glucanotransferase (malQ) from Chlamydia trachomatis serovar D (strain ATCC VR-885 / DSM 19411 / UW-3/Cx).